A 155-amino-acid polypeptide reads, in one-letter code: Urease accessory protein UreE (155 aa).

This sequence belongs to the UreE family.

Its subcellular location is the cytoplasm. Its function is as follows. Involved in urease metallocenter assembly. Binds nickel. Probably functions as a nickel donor during metallocenter assembly. The chain is Urease accessory protein UreE from Synechococcus sp. (strain CC9311).